The sequence spans 119 residues: Large ribosomal subunit protein uL18 (119 aa).

Belongs to the universal ribosomal protein uL18 family. In terms of assembly, part of the 50S ribosomal subunit; part of the 5S rRNA/L5/L18/L25 subcomplex. Contacts the 5S and 23S rRNAs.

Its function is as follows. This is one of the proteins that bind and probably mediate the attachment of the 5S RNA into the large ribosomal subunit, where it forms part of the central protuberance. In Borreliella afzelii (strain PKo) (Borrelia afzelii), this protein is Large ribosomal subunit protein uL18.